We begin with the raw amino-acid sequence, 332 residues long: Acetyl-coenzyme A carboxylase carboxyl transferase subunit alpha (332 aa).

The 255-residue stretch at Q44–E298 folds into the CoA carboxyltransferase C-terminal domain.

The protein belongs to the AccA family. Acetyl-CoA carboxylase is a heterohexamer composed of biotin carboxyl carrier protein (AccB), biotin carboxylase (AccC) and two subunits each of ACCase subunit alpha (AccA) and ACCase subunit beta (AccD).

The protein resides in the cytoplasm. The catalysed reaction is N(6)-carboxybiotinyl-L-lysyl-[protein] + acetyl-CoA = N(6)-biotinyl-L-lysyl-[protein] + malonyl-CoA. It functions in the pathway lipid metabolism; malonyl-CoA biosynthesis; malonyl-CoA from acetyl-CoA: step 1/1. Its function is as follows. Component of the acetyl coenzyme A carboxylase (ACC) complex. First, biotin carboxylase catalyzes the carboxylation of biotin on its carrier protein (BCCP) and then the CO(2) group is transferred by the carboxyltransferase to acetyl-CoA to form malonyl-CoA. The sequence is that of Acetyl-coenzyme A carboxylase carboxyl transferase subunit alpha from Crocosphaera subtropica (strain ATCC 51142 / BH68) (Cyanothece sp. (strain ATCC 51142)).